The following is a 135-amino-acid chain: uncharacterized protein (135 aa).

2 consecutive transmembrane segments (helical) span residues 20-40 and 47-67; these read IFSF…NTKL and IAYF…IHGT.

It belongs to the plectrovirus ORF5 family.

It is found in the host membrane. This is an uncharacterized protein from Spiroplasma virus SpV1-C74 (SpV1).